The following is a 188-amino-acid chain: Cytochrome b-245 chaperone 1 homolog (188 aa).

A helical transmembrane segment spans residues 20-42; the sequence is SIRSWSLLVGILSVGLAAAYYST.

The protein belongs to the CYBC1 family.

The protein resides in the endoplasmic reticulum membrane. Functionally, functions as a chaperone necessary for a stable expression of the CYBA and CYBB subunits of the cytochrome b-245 heterodimer. This is Cytochrome b-245 chaperone 1 homolog (cybc1) from Xenopus laevis (African clawed frog).